The chain runs to 269 residues: Glutamate racemase (269 aa).

Substrate-binding positions include 7–8 and 39–40; these read DS and YG. The active-site Proton donor/acceptor is cysteine 70. 71–72 contributes to the substrate binding site; that stretch reads NT. The active-site Proton donor/acceptor is the cysteine 194. Position 195–196 (195–196) interacts with substrate; that stretch reads TH.

This sequence belongs to the aspartate/glutamate racemases family.

The catalysed reaction is L-glutamate = D-glutamate. Its pathway is cell wall biogenesis; peptidoglycan biosynthesis. In terms of biological role, provides the (R)-glutamate required for cell wall biosynthesis. This chain is Glutamate racemase, found in Ruegeria pomeroyi (strain ATCC 700808 / DSM 15171 / DSS-3) (Silicibacter pomeroyi).